The chain runs to 137 residues: Hemoglobin subunit alpha-2 (137 aa).

Residues 1 to 137 enclose the Globin domain; sequence DDRSHILAIW…VGGSLTSKYR (137 aa). An O2-binding site is contributed by histidine 54. Histidine 83 serves as a coordination point for heme b.

The protein belongs to the globin family. The N-terminus of the mature protein is acetylated. Red blood cells.

The sequence is that of Hemoglobin subunit alpha-2 from Telmatobius peruvianus (Andean frog).